The sequence spans 281 residues: tRNA dimethylallyltransferase (281 aa).

Interaction with substrate tRNA stretches follow at residues 13–16 (DSAQ) and 133–137 (QRITR).

This sequence belongs to the IPP transferase family. As to quaternary structure, monomer. Mg(2+) is required as a cofactor.

It catalyses the reaction adenosine(37) in tRNA + dimethylallyl diphosphate = N(6)-dimethylallyladenosine(37) in tRNA + diphosphate. Functionally, catalyzes the transfer of a dimethylallyl group onto the adenine at position 37 in tRNAs that read codons beginning with uridine, leading to the formation of N6-(dimethylallyl)adenosine (i(6)A). This chain is tRNA dimethylallyltransferase, found in Novosphingobium aromaticivorans (strain ATCC 700278 / DSM 12444 / CCUG 56034 / CIP 105152 / NBRC 16084 / F199).